The chain runs to 348 residues: Protein pelota homolog (348 aa).

Belongs to the eukaryotic release factor 1 family. Pelota subfamily. In terms of assembly, monomer. It depends on a divalent metal cation as a cofactor.

Its subcellular location is the cytoplasm. Its function is as follows. May function in recognizing stalled ribosomes, interact with stem-loop structures in stalled mRNA molecules, and effect endonucleolytic cleavage of the mRNA. May play a role in the release non-functional ribosomes and degradation of damaged mRNAs. Has endoribonuclease activity. The polypeptide is Protein pelota homolog (Methanococcus maripaludis (strain C5 / ATCC BAA-1333)).